A 98-amino-acid chain; its full sequence is NADH-ubiquinone oxidoreductase chain 4L (98 aa).

A run of 3 helical transmembrane segments spans residues 1–21 (MTPT…GMLI), 29–49 (SLLC…LIAL), and 61–81 (IILL…LVSI).

The protein belongs to the complex I subunit 4L family. In terms of assembly, core subunit of respiratory chain NADH dehydrogenase (Complex I) which is composed of 45 different subunits.

Its subcellular location is the mitochondrion inner membrane. The enzyme catalyses a ubiquinone + NADH + 5 H(+)(in) = a ubiquinol + NAD(+) + 4 H(+)(out). In terms of biological role, core subunit of the mitochondrial membrane respiratory chain NADH dehydrogenase (Complex I) which catalyzes electron transfer from NADH through the respiratory chain, using ubiquinone as an electron acceptor. Part of the enzyme membrane arm which is embedded in the lipid bilayer and involved in proton translocation. This is NADH-ubiquinone oxidoreductase chain 4L (MT-ND4L) from Macaca maura (Moor macaque).